Here is a 322-residue protein sequence, read N- to C-terminus: F-box protein At2g16300 (322 aa).

One can recognise an F-box domain in the interval 2 to 50 (ADWSLLPNDLLELIVGHLETSFEIVLFRSVCSSWRSVVPPQDQSRCLSI).

In Arabidopsis thaliana (Mouse-ear cress), this protein is F-box protein At2g16300.